A 358-amino-acid chain; its full sequence is Protein-glutamate methylesterase/protein-glutamine glutaminase 2 (358 aa).

The region spanning 8–125 (RVLIVDDSAV…ARGLEGYAEE (118 aa)) is the Response regulatory domain. D59 bears the 4-aspartylphosphate mark. Positions 157 to 352 (PMPGSALRFR…LDRVAERLLA (196 aa)) constitute a CheB-type methylesterase domain. Residues S177, H203, and D299 contribute to the active site.

This sequence belongs to the CheB family. In terms of processing, phosphorylated by CheA. Phosphorylation of the N-terminal regulatory domain activates the methylesterase activity.

Its subcellular location is the cytoplasm. It catalyses the reaction [protein]-L-glutamate 5-O-methyl ester + H2O = L-glutamyl-[protein] + methanol + H(+). It carries out the reaction L-glutaminyl-[protein] + H2O = L-glutamyl-[protein] + NH4(+). Its function is as follows. Involved in chemotaxis. Part of a chemotaxis signal transduction system that modulates chemotaxis in response to various stimuli. Catalyzes the demethylation of specific methylglutamate residues introduced into the chemoreceptors (methyl-accepting chemotaxis proteins or MCP) by CheR. Also mediates the irreversible deamidation of specific glutamine residues to glutamic acid. The sequence is that of Protein-glutamate methylesterase/protein-glutamine glutaminase 2 from Xanthomonas oryzae pv. oryzae (strain MAFF 311018).